A 501-amino-acid polypeptide reads, in one-letter code: Cytochrome P450 90A3 (501 aa).

A helical membrane pass occupies residues 2-22; that stretch reads AAAALLLLAAAAAIVVVAMVL. Cys-446 contributes to the heme binding site.

Belongs to the cytochrome P450 family. Requires heme as cofactor. In terms of tissue distribution, highly expressed in shoot apex and inflorenscence. Expressed in roots, stems, leaf blades and leaf sheaths.

It localises to the membrane. It functions in the pathway plant hormone biosynthesis; brassinosteroid biosynthesis. Its function is as follows. Catalyzes the C23-alpha-hydroxylation step in brassinosteroid biosynthesis. Converts 6-deoxocathasterone (6-deoxoCT) to 6-deoxoteasterone (6-deoxoTE) in the late C6-oxidation pathway and cathasterone (CT) to teasterone (TE) in the early C6-oxidation pathway of brassinolide (BL) biosynthesis. In Oryza sativa subsp. japonica (Rice), this protein is Cytochrome P450 90A3.